Reading from the N-terminus, the 306-residue chain is tRNA pseudouridine synthase B (306 aa).

Asp46 (nucleophile) is an active-site residue.

This sequence belongs to the pseudouridine synthase TruB family. Type 1 subfamily.

It carries out the reaction uridine(55) in tRNA = pseudouridine(55) in tRNA. In terms of biological role, responsible for synthesis of pseudouridine from uracil-55 in the psi GC loop of transfer RNAs. This is tRNA pseudouridine synthase B from Gluconacetobacter diazotrophicus (strain ATCC 49037 / DSM 5601 / CCUG 37298 / CIP 103539 / LMG 7603 / PAl5).